Here is a 393-residue protein sequence, read N- to C-terminus: Phosphoglycerate kinase (393 aa).

Residues 21–23 (DLN), R36, 59–62 (HLGR), R113, and R146 each bind substrate. ATP is bound by residues K197, E319, and 345–348 (GGDT).

Belongs to the phosphoglycerate kinase family. Monomer.

Its subcellular location is the cytoplasm. It catalyses the reaction (2R)-3-phosphoglycerate + ATP = (2R)-3-phospho-glyceroyl phosphate + ADP. It functions in the pathway carbohydrate degradation; glycolysis; pyruvate from D-glyceraldehyde 3-phosphate: step 2/5. This Nitratidesulfovibrio vulgaris (strain ATCC 29579 / DSM 644 / CCUG 34227 / NCIMB 8303 / VKM B-1760 / Hildenborough) (Desulfovibrio vulgaris) protein is Phosphoglycerate kinase.